A 668-amino-acid chain; its full sequence is tRNA 5-methylaminomethyl-2-thiouridine biosynthesis bifunctional protein MnmC (668 aa).

Positions 1–245 (MKHYSIQPAN…KREMLCGVME (245 aa)) are tRNA (mnm(5)s(2)U34)-methyltransferase. The segment at 270–668 (IGGGIACALL…LLKGKAVKAG (399 aa)) is FAD-dependent cmnm(5)s(2)U34 oxidoreductase.

In the N-terminal section; belongs to the methyltransferase superfamily. tRNA (mnm(5)s(2)U34)-methyltransferase family. It in the C-terminal section; belongs to the DAO family. Requires FAD as cofactor.

It is found in the cytoplasm. It catalyses the reaction 5-aminomethyl-2-thiouridine(34) in tRNA + S-adenosyl-L-methionine = 5-methylaminomethyl-2-thiouridine(34) in tRNA + S-adenosyl-L-homocysteine + H(+). Catalyzes the last two steps in the biosynthesis of 5-methylaminomethyl-2-thiouridine (mnm(5)s(2)U) at the wobble position (U34) in tRNA. Catalyzes the FAD-dependent demodification of cmnm(5)s(2)U34 to nm(5)s(2)U34, followed by the transfer of a methyl group from S-adenosyl-L-methionine to nm(5)s(2)U34, to form mnm(5)s(2)U34. This is tRNA 5-methylaminomethyl-2-thiouridine biosynthesis bifunctional protein MnmC from Shigella boydii serotype 4 (strain Sb227).